A 776-amino-acid polypeptide reads, in one-letter code: Probable E3 ubiquitin-protein ligase HECTD2 (776 aa).

Residues 1 to 46 (MSEAVRVPSPATPLVVAAAAPEERKGKESEREKLPPIVSAGAGATA) are disordered. Over residues 7–20 (VPSPATPLVVAAAA) the composition is skewed to low complexity. S9 is modified (phosphoserine). A compositionally biased stretch (basic and acidic residues) spans 21–34 (PEERKGKESEREKL). An HECT domain is found at 437 to 776 (KRADLKKKLK…ISNSEGFGLE (340 aa)). C744 (glycyl thioester intermediate) is an active-site residue.

The catalysed reaction is S-ubiquitinyl-[E2 ubiquitin-conjugating enzyme]-L-cysteine + [acceptor protein]-L-lysine = [E2 ubiquitin-conjugating enzyme]-L-cysteine + N(6)-ubiquitinyl-[acceptor protein]-L-lysine.. It functions in the pathway protein modification; protein ubiquitination. Its function is as follows. E3 ubiquitin-protein ligase which accepts ubiquitin from an E2 ubiquitin-conjugating enzyme in the form of a thioester and then directly transfers the ubiquitin to targeted substrates. In Pongo abelii (Sumatran orangutan), this protein is Probable E3 ubiquitin-protein ligase HECTD2 (HECTD2).